The sequence spans 255 residues: Pyrroloquinoline-quinone synthase (255 aa).

It belongs to the PqqC family.

The enzyme catalyses 6-(2-amino-2-carboxyethyl)-7,8-dioxo-1,2,3,4,7,8-hexahydroquinoline-2,4-dicarboxylate + 3 O2 = pyrroloquinoline quinone + 2 H2O2 + 2 H2O + H(+). Its pathway is cofactor biosynthesis; pyrroloquinoline quinone biosynthesis. In terms of biological role, ring cyclization and eight-electron oxidation of 3a-(2-amino-2-carboxyethyl)-4,5-dioxo-4,5,6,7,8,9-hexahydroquinoline-7,9-dicarboxylic-acid to PQQ. This Cereibacter sphaeroides (strain ATCC 17025 / ATH 2.4.3) (Rhodobacter sphaeroides) protein is Pyrroloquinoline-quinone synthase.